We begin with the raw amino-acid sequence, 218 residues long: Elongation factor Ts (218 aa).

Residues 82-85 are involved in Mg(2+) ion dislocation from EF-Tu; the sequence is TDFV.

It belongs to the EF-Ts family.

The protein localises to the cytoplasm. Functionally, associates with the EF-Tu.GDP complex and induces the exchange of GDP to GTP. It remains bound to the aminoacyl-tRNA.EF-Tu.GTP complex up to the GTP hydrolysis stage on the ribosome. The chain is Elongation factor Ts from Prochlorococcus marinus (strain MIT 9313).